Reading from the N-terminus, the 405-residue chain is Acetylornithine aminotransferase 1 (405 aa).

Pyridoxal 5'-phosphate-binding positions include 103–104 (GA) and Phe-136. A N(2)-acetyl-L-ornithine-binding site is contributed by Arg-139. 221–224 (DEVQ) contributes to the pyridoxal 5'-phosphate binding site. Lys-250 is subject to N6-(pyridoxal phosphate)lysine. N(2)-acetyl-L-ornithine is bound at residue Ser-278. Position 279 (Thr-279) interacts with pyridoxal 5'-phosphate.

Belongs to the class-III pyridoxal-phosphate-dependent aminotransferase family. ArgD subfamily. As to quaternary structure, homodimer. Requires pyridoxal 5'-phosphate as cofactor.

Its subcellular location is the cytoplasm. It catalyses the reaction N(2)-acetyl-L-ornithine + 2-oxoglutarate = N-acetyl-L-glutamate 5-semialdehyde + L-glutamate. Its pathway is amino-acid biosynthesis; L-arginine biosynthesis; N(2)-acetyl-L-ornithine from L-glutamate: step 4/4. In Bradyrhizobium diazoefficiens (strain JCM 10833 / BCRC 13528 / IAM 13628 / NBRC 14792 / USDA 110), this protein is Acetylornithine aminotransferase 1.